Reading from the N-terminus, the 478-residue chain is Lysine histidine transporter-like 7 (478 aa).

Topologically, residues 1–63 (MSIALGNLFD…ITESRKGNVY (63 aa)) are cytoplasmic. A disordered region spans residues 15–45 (ESGGSPLFMSPAPSTDPQPISGEKNGGDGGR). A helical transmembrane segment spans residues 64-86 (TATFHLLCSGIGLQVILLPAAFA). Residues 87 to 89 (ALG) are Extracellular-facing. Residues 90-112 (WVWGTIILTVGFVWKLYTTWLLV) traverse the membrane as a helical segment. Residues 113 to 140 (QLHEAVPGIRISRYVRLAIASFGVKLGK) lie on the Cytoplasmic side of the membrane. The helical transmembrane segment at 141 to 161 (LLGIFPVMYLSGGACTILVIT) threads the bilayer. Residues 162–177 (GGKSIQQLLQIMSDDN) lie on the Extracellular side of the membrane. Residues 178–198 (TAPLTSVQCFLVFSCIAMIMS) form a helical membrane-spanning segment. Residues 199 to 205 (QFPNLNS) lie on the Cytoplasmic side of the membrane. A helical membrane pass occupies residues 206–226 (LFGVSLIGAFMGIAYCTVIWI). The Extracellular segment spans residues 227-241 (LPVASDSQRTQVSVS). The chain crosses the membrane as a helical span at residues 242–262 (YATMDKSFVHIFNAIGLIALV). At 263 to 291 (YRGNNLVLEIQGTLPSDSKNPSCKTMWRA) the chain is on the cytoplasmic side. A helical membrane pass occupies residues 292-312 (VMISHALVAICMFPLTFAVYW). Residues 313-340 (AYGDKIPATGGPVGNYLKLYTQEHSKRA) are Extracellular-facing. A helical transmembrane segment spans residues 341-361 (ACFIHLTFIFSCLCSYPINLM). The Cytoplasmic portion of the chain corresponds to 362–379 (PACDNIEMVYITKKKKPA). The chain crosses the membrane as a helical span at residues 380–402 (SIIVRMMLRVFLSLVCFTIAVGF). Topologically, residues 403-406 (PFLP) are extracellular. The helical transmembrane segment at 407 to 429 (YLAVLIGAIALLVTFTYPCFMWI) threads the bilayer. At 430–439 (SIKKPQRKSP) the chain is on the cytoplasmic side. Residues 440–460 (MWLFNVLVGCLGASLSVLLLV) form a helical membrane-spanning segment. Topologically, residues 461-478 (ASAMRLAQKGLHANFFRP) are extracellular.

This sequence belongs to the amino acid/polyamine transporter 2 family. Amino acid/auxin permease (AAAP) (TC 2.A.18.2) subfamily.

The protein resides in the cell membrane. In terms of biological role, amino acid transporter. This chain is Lysine histidine transporter-like 7, found in Arabidopsis thaliana (Mouse-ear cress).